The sequence spans 144 residues: Cytochrome c oxidase subunit 4 isoform 1, mitochondrial (144 aa).

Residues 1-73 (SVVKSEDFTL…SFAEMNRRSN (73 aa)) are Mitochondrial matrix-facing. Lys4 bears the N6-acetyllysine; alternate mark. Lys4 carries the post-translational modification N6-succinyllysine; alternate. At Lys28 the chain carries N6-acetyllysine. Phosphoserine occurs at positions 31 and 33. N6-acetyllysine; alternate is present on Lys35. Residue Lys35 is modified to N6-succinyllysine; alternate. Position 42 is an N6-acetyllysine (Lys42). The chain crosses the membrane as a helical span at residues 74–99 (EWKTVVGTAMFFFGITALIVMWEKRY). Residues 100-144 (VYGPLPQTFDKEWVAMQTKRMLDMKVNPIQGLASKWDYEKNEWKK) are Mitochondrial intermembrane-facing.

This sequence belongs to the cytochrome c oxidase IV family. Component of the cytochrome c oxidase (complex IV, CIV), a multisubunit enzyme composed of 14 subunits. The complex is composed of a catalytic core of 3 subunits MT-CO1, MT-CO2 and MT-CO3, encoded in the mitochondrial DNA, and 11 supernumerary subunits COX4I, COX5A, COX5B, COX6A, COX6B, COX6C, COX7A, COX7B, COX7C, COX8 and NDUFA4, which are encoded in the nuclear genome. The complex exists as a monomer or a dimer and forms supercomplexes (SCs) in the inner mitochondrial membrane with NADH-ubiquinone oxidoreductase (complex I, CI) and ubiquinol-cytochrome c oxidoreductase (cytochrome b-c1 complex, complex III, CIII), resulting in different assemblies (supercomplex SCI(1)III(2)IV(1) and megacomplex MCI(2)III(2)IV(2)). Interacts with PHB2; the interaction decreases in absence of SPHK2. Interacts with AFG1L. Interacts with ABCB7; this interaction allows the regulation of cellular iron homeostasis and cellular reactive oxygen species (ROS) levels in cardiomyocytes. Interacts with FLVCR2; this interaction occurs in the absence of heme and is disrupted upon heme binding. Interacts with IRGC.

The protein resides in the mitochondrion inner membrane. It participates in energy metabolism; oxidative phosphorylation. Component of the cytochrome c oxidase, the last enzyme in the mitochondrial electron transport chain which drives oxidative phosphorylation. The respiratory chain contains 3 multisubunit complexes succinate dehydrogenase (complex II, CII), ubiquinol-cytochrome c oxidoreductase (cytochrome b-c1 complex, complex III, CIII) and cytochrome c oxidase (complex IV, CIV), that cooperate to transfer electrons derived from NADH and succinate to molecular oxygen, creating an electrochemical gradient over the inner membrane that drives transmembrane transport and the ATP synthase. Cytochrome c oxidase is the component of the respiratory chain that catalyzes the reduction of oxygen to water. Electrons originating from reduced cytochrome c in the intermembrane space (IMS) are transferred via the dinuclear copper A center (CU(A)) of subunit 2 and heme A of subunit 1 to the active site in subunit 1, a binuclear center (BNC) formed by heme A3 and copper B (CU(B)). The BNC reduces molecular oxygen to 2 water molecules using 4 electrons from cytochrome c in the IMS and 4 protons from the mitochondrial matrix. This chain is Cytochrome c oxidase subunit 4 isoform 1, mitochondrial (COX4I1), found in Theropithecus gelada (Gelada baboon).